Here is a 99-residue protein sequence, read N- to C-terminus: UPF0235 protein ASA_3628 (99 aa).

Belongs to the UPF0235 family.

In Aeromonas salmonicida (strain A449), this protein is UPF0235 protein ASA_3628.